The chain runs to 143 residues: D-aminoacyl-tRNA deacylase (143 aa).

Positions 135 to 136 (GP) match the Gly-cisPro motif, important for rejection of L-amino acids motif.

This sequence belongs to the DTD family. Homodimer.

The protein localises to the cytoplasm. The catalysed reaction is glycyl-tRNA(Ala) + H2O = tRNA(Ala) + glycine + H(+). The enzyme catalyses a D-aminoacyl-tRNA + H2O = a tRNA + a D-alpha-amino acid + H(+). Functionally, an aminoacyl-tRNA editing enzyme that deacylates mischarged D-aminoacyl-tRNAs. Also deacylates mischarged glycyl-tRNA(Ala), protecting cells against glycine mischarging by AlaRS. Acts via tRNA-based rather than protein-based catalysis; rejects L-amino acids rather than detecting D-amino acids in the active site. By recycling D-aminoacyl-tRNA to D-amino acids and free tRNA molecules, this enzyme counteracts the toxicity associated with the formation of D-aminoacyl-tRNA entities in vivo and helps enforce protein L-homochirality. This is D-aminoacyl-tRNA deacylase from Mycobacterium marinum (strain ATCC BAA-535 / M).